Reading from the N-terminus, the 87-residue chain is Precursor of CEP8 (87 aa).

The signal sequence occupies residues 1–29 (MAKALFFNFCISLLIIAILVSHEIIPTEA). Residues 30-72 (RHLRTHRKSIKNSTLTVHEGAGGLRTGGGSVKTDISKEEHGVD) constitute a propeptide that is removed on maturation. The N-linked (GlcNAc...) asparagine glycan is linked to Asn-41. Positions 41–87 (NSTLTVHEGAGGLRTGGGSVKTDISKEEHGVDEFRPTTPGNSPGIGH) are disordered. Positions 49–59 (GAGGLRTGGGS) are enriched in gly residues. Positions 63–75 (DISKEEHGVDEFR) are enriched in basic and acidic residues. Hydroxyproline is present on residues Pro-76, Pro-79, and Pro-83.

It belongs to the C-terminally encoded plant signaling peptide (CEP) family. Interacts with CEP receptors (e.g. CEPR1 and CEPR2). Post-translationally, the mature small signaling peptide is generated by proteolytic processing of the longer precursor. As to expression, expressed in lateral root primordia and in lateral roots excluding the meristem region. Also present in the aerial tissues, such as leaf petioles and the shoot apex region.

It is found in the secreted. It localises to the extracellular space. The protein resides in the apoplast. Functionally, extracellular signaling peptide that may regulate primary root growth rate and systemic nitrogen (N)-demand signaling. Mediates up-regulation of genes involved in N uptake and assimilation pathways. This Arabidopsis thaliana (Mouse-ear cress) protein is Precursor of CEP8.